Consider the following 213-residue polypeptide: Kynurenine formamidase (213 aa).

Tryptophan 18 lines the substrate pocket. Histidine 48, histidine 52, and aspartate 54 together coordinate Zn(2+). Histidine 58 serves as the catalytic Proton donor/acceptor. The Zn(2+) site is built by histidine 160 and glutamate 172.

It belongs to the Cyclase 1 superfamily. KynB family. In terms of assembly, homodimer. The cofactor is Zn(2+).

It carries out the reaction N-formyl-L-kynurenine + H2O = L-kynurenine + formate + H(+). The protein operates within amino-acid degradation; L-tryptophan degradation via kynurenine pathway; L-kynurenine from L-tryptophan: step 2/2. In terms of biological role, catalyzes the hydrolysis of N-formyl-L-kynurenine to L-kynurenine, the second step in the kynurenine pathway of tryptophan degradation. The polypeptide is Kynurenine formamidase (Burkholderia pseudomallei (strain 1710b)).